Here is a 386-residue protein sequence, read N- to C-terminus: Ovalbumin (386 aa).

Gly-2 carries the N-acetylglycine modification. The residue at position 69 (Ser-69) is a Phosphoserine. Cys-74 and Cys-121 are disulfide-bonded. Residue Asn-293 is glycosylated (N-linked (GlcNAc...) asparagine). Ser-345 carries the phosphoserine modification.

This sequence belongs to the serpin family. Ov-serpin subfamily. The N-terminus is blocked.

Its subcellular location is the secreted. Storage protein of egg white. Lacks protease inhibitory activity. The polypeptide is Ovalbumin (SERPINB14) (Dromaius novaehollandiae (Emu)).